The following is a 168-amino-acid chain: MNKWSRLYVITVRRTFPGRRNIVLTQYWNKSKKMSDESNDVKWNDALTPLQLMVLRDKATERPNTGAYLHTNESGVYHCANCDRPLYSSKAKFDARCGWPAFYEEVSPGAITYHRDNSLMPARVEICCARCGGHLGHVFEGEGWKQLLNLPKDTRHCVNSASLNLKKD.

Positions 40 to 168 (DVKWNDALTP…NSASLNLKKD (129 aa)) constitute a MsrB domain. Zn(2+) contacts are provided by Cys-79, Cys-82, Cys-128, and Cys-131. A disulfide bridge connects residues Cys-97 and Cys-157. Cys-157 acts as the Nucleophile in catalysis.

The protein belongs to the MsrB Met sulfoxide reductase family. It depends on Zn(2+) as a cofactor.

The enzyme catalyses L-methionyl-[protein] + [thioredoxin]-disulfide + H2O = L-methionyl-(R)-S-oxide-[protein] + [thioredoxin]-dithiol. In terms of biological role, methionine-R-sulfoxide reductase which catalyzes the reduction of methionine sulfoxide (MetSO) to methionine in proteins. Plays a protective role against oxidative stress by restoring activity to proteins that have been inactivated by methionine oxidation. Protects iron-sulfur clusters from oxidative inactivation along with MXR1. Involved in the regulation of lifespan. This chain is Peptide methionine sulfoxide reductase 2 (MXR2), found in Saccharomyces cerevisiae (strain ATCC 204508 / S288c) (Baker's yeast).